We begin with the raw amino-acid sequence, 726 residues long: Tripartite terminase subunit 1 (726 aa).

The C3H1-type zinc-finger motif lies at 189-217 (CMKCYEELTLTPNQGKSLRKRLHGKFCNH). 626-633 (YNDVFGKR) provides a ligand contact to ATP.

This sequence belongs to the herpesviridae TRM1 protein family. As to quaternary structure, associates with TRM2 and TRM3 to form the tripartite terminase complex. Interacts with portal protein.

Its subcellular location is the host nucleus. Functionally, component of the molecular motor that translocates viral genomic DNA in empty capsid during DNA packaging. Forms a tripartite terminase complex together with TRM2 and TRM3 in the host cytoplasm. Once the complex reaches the host nucleus, it interacts with the capsid portal vertex. This portal forms a ring in which genomic DNA is translocated into the capsid. TRM1 carries an endonuclease activity that plays an important role for the cleavage of concatemeric viral DNA into unit length genomes. The sequence is that of Tripartite terminase subunit 1 from Human herpesvirus 6B (strain Z29) (HHV-6 variant B).